A 150-amino-acid chain; its full sequence is SsrA-binding protein (150 aa).

This sequence belongs to the SmpB family.

The protein resides in the cytoplasm. In terms of biological role, required for rescue of stalled ribosomes mediated by trans-translation. Binds to transfer-messenger RNA (tmRNA), required for stable association of tmRNA with ribosomes. tmRNA and SmpB together mimic tRNA shape, replacing the anticodon stem-loop with SmpB. tmRNA is encoded by the ssrA gene; the 2 termini fold to resemble tRNA(Ala) and it encodes a 'tag peptide', a short internal open reading frame. During trans-translation Ala-aminoacylated tmRNA acts like a tRNA, entering the A-site of stalled ribosomes, displacing the stalled mRNA. The ribosome then switches to translate the ORF on the tmRNA; the nascent peptide is terminated with the 'tag peptide' encoded by the tmRNA and targeted for degradation. The ribosome is freed to recommence translation, which seems to be the essential function of trans-translation. In Borrelia garinii subsp. bavariensis (strain ATCC BAA-2496 / DSM 23469 / PBi) (Borreliella bavariensis), this protein is SsrA-binding protein.